The sequence spans 385 residues: MKALQFGAGNIGRGFIGKTLSESGFSVIFSDVNQNIVDAINYNREYFVKIIGSNQNKTVNIKRVSAINSNDSNIKKIISSVDLITTAVGPTALEKIALIITQGIIFKIKNQFTKPLNIIACENKIKSSSFLKQVVLKNLPIKYHDYLNKYIGFIDCSIDTIIPAINNKDDLFLTVEEFKEWIVNINQFKGAVPKIVDMKFSNNLDAFIERKLFTLNTGHAIAAYLGLIKNYKTIQDAISDKKIRVIVRSAMEESGSVLIKRYNFNKNDHLDYIEKIFLRFENPFLSDKLERIGRNPLQKLRREDRLIKPFLGAFEYNLPYSNLAKGIAAAFYYHNKNDLESIELSSSIKKQGLESTIIKICDLPVNSKEVYSIILEYNLIKKIIR.

3-14 (ALQFGAGNIGRG) is a binding site for NAD(+).

It belongs to the mannitol dehydrogenase family.

The enzyme catalyses D-mannitol 1-phosphate + NAD(+) = beta-D-fructose 6-phosphate + NADH + H(+). In Buchnera aphidicola subsp. Acyrthosiphon pisum (strain APS) (Acyrthosiphon pisum symbiotic bacterium), this protein is Mannitol-1-phosphate 5-dehydrogenase (mtlD).